A 209-amino-acid chain; its full sequence is Uracil phosphoribosyltransferase (209 aa).

5-phospho-alpha-D-ribose 1-diphosphate is bound by residues Arg79, Arg104, and 131–139; that span reads DPMLATGGS. Residues Ile194 and 199–201 contribute to the uracil site; that span reads GDA. Asp200 contacts 5-phospho-alpha-D-ribose 1-diphosphate.

It belongs to the UPRTase family. Mg(2+) is required as a cofactor.

It carries out the reaction UMP + diphosphate = 5-phospho-alpha-D-ribose 1-diphosphate + uracil. It functions in the pathway pyrimidine metabolism; UMP biosynthesis via salvage pathway; UMP from uracil: step 1/1. Allosterically activated by GTP. Functionally, catalyzes the conversion of uracil and 5-phospho-alpha-D-ribose 1-diphosphate (PRPP) to UMP and diphosphate. The chain is Uracil phosphoribosyltransferase from Alkaliphilus oremlandii (strain OhILAs) (Clostridium oremlandii (strain OhILAs)).